We begin with the raw amino-acid sequence, 411 residues long: Dipeptidase 1 (411 aa).

Residues 1–16 form the signal peptide; it reads MWSGWWLWPLVAVCTA. Residues histidine 36 and aspartate 38 each contribute to the Zn(2+) site. N-linked (GlcNAc...) asparagine glycosylation occurs at asparagine 57. Cysteine 87 and cysteine 170 are oxidised to a cystine. Glutamate 141 contributes to the Zn(2+) binding site. A substrate-binding site is contributed by histidine 168. Zn(2+) is bound by residues histidine 214 and histidine 235. Residues cysteine 242 and cysteine 274 are joined by a disulfide bond. Position 246 (arginine 246) interacts with substrate. Asparagine 279 is a glycosylation site (N-linked (GlcNAc...) asparagine). Residue aspartate 304 participates in substrate binding. Residues asparagine 332 and asparagine 358 are each glycosylated (N-linked (GlcNAc...) asparagine). Serine 385 is lipidated: GPI-anchor amidated serine. Residues 386 to 411 constitute a propeptide, removed in mature form; that stretch reads GASSLHRHWGLLLASLAPLVLCLSLL.

This sequence belongs to the metallo-dependent hydrolases superfamily. Peptidase M19 family. As to quaternary structure, homodimer; disulfide-linked. Zn(2+) serves as cofactor. As to expression, expressed in lung and kidneys.

It is found in the apical cell membrane. It localises to the cell projection. The protein localises to the microvillus membrane. It catalyses the reaction an L-aminoacyl-L-amino acid + H2O = 2 an L-alpha-amino acid. It carries out the reaction leukotriene D4 + H2O = leukotriene E4 + glycine. The enzyme catalyses a beta-lactam + H2O = a substituted beta-amino acid. The catalysed reaction is L-cystine-bis-glycine + 2 H2O = L-cystine + 2 glycine. It catalyses the reaction glycyldehydrophenylalanine + H2O = 2,3-didehydrophenylalanine + glycine. With respect to regulation, inhibited by L-penicillamine. Beta-lactamase activity is inhibited by cilastatin. Its function is as follows. Hydrolyzes a wide range of dipeptides including the conversion of leukotriene D4 to leukotriene E4. Hydrolyzes cystinyl-bis-glycine (cys-bis-gly) formed during glutathione degradation. Also possesses beta lactamase activity and can hydrolyze the beta-lactam antibiotic imipenem. In terms of biological role, independently of its dipeptidase activity, acts as an adhesion receptor for neutrophil recruitment from bloodstream into inflamed lungs and liver. The sequence is that of Dipeptidase 1 (DPEP1) from Homo sapiens (Human).